A 208-amino-acid chain; its full sequence is N-(5'-phosphoribosyl)anthranilate isomerase (208 aa).

The protein belongs to the TrpF family.

It catalyses the reaction N-(5-phospho-beta-D-ribosyl)anthranilate = 1-(2-carboxyphenylamino)-1-deoxy-D-ribulose 5-phosphate. The protein operates within amino-acid biosynthesis; L-tryptophan biosynthesis; L-tryptophan from chorismate: step 3/5. The sequence is that of N-(5'-phosphoribosyl)anthranilate isomerase from Neisseria gonorrhoeae (strain ATCC 700825 / FA 1090).